Consider the following 313-residue polypeptide: Protein ABA AND ROS SENSITIVE 1 (313 aa).

A Nuclear localization signal 1 motif is present at residues 5-12 (AKKKAMFR). The C2H2-type zinc-finger motif lies at 39–61 (CRVCNVVLKSESLWDVHQASRKH). Over residues 115–131 (ARAEVEPAKSKNLEQSK) the composition is skewed to basic and acidic residues. 3 disordered regions span residues 115 to 189 (ARAE…LPTG), 232 to 254 (MEEE…QRSY), and 271 to 313 (ARLA…AQHL). Residues 155 to 176 (TDSSNTKTTSEPKQSQTQTTGP) show a composition bias toward polar residues. Positions 232–248 (MEEEEVDAAETIEEEEQ) are enriched in acidic residues. A coiled-coil region spans residues 232–271 (MEEEEVDAAETIEEEEQREQRSYKEKVEILKRKKMELKAA). Residues 274–281 (AKRSKTSE) carry the Nuclear localization signal 2 motif. Residues 293-305 (ESPSDEEDDEDSA) show a composition bias toward acidic residues.

Mostly expressed in siliques and, to a lower extent, in roots. Barely deteclable in leaves and stems.

It localises to the nucleus. Its subcellular location is the cytoplasm. Essential for breaking seed dormancy before seed germination. Prevents reactive oxygen species (ROS) accumulation in response to abscisic acid (ABA) and oxidative stress, probably by repressing the accumulation of ABA-induced ROS-scavenging enzymes (e.g. CSD3). This is Protein ABA AND ROS SENSITIVE 1 from Arabidopsis thaliana (Mouse-ear cress).